A 221-amino-acid polypeptide reads, in one-letter code: Probable septum site-determining protein MinC (221 aa).

This sequence belongs to the MinC family. In terms of assembly, interacts with MinD and FtsZ.

Cell division inhibitor that blocks the formation of polar Z ring septums. Rapidly oscillates between the poles of the cell to destabilize FtsZ filaments that have formed before they mature into polar Z rings. Prevents FtsZ polymerization. The chain is Probable septum site-determining protein MinC from Shewanella sp. (strain MR-7).